A 309-amino-acid polypeptide reads, in one-letter code: Mannitol-1-phosphatase (309 aa).

The active-site Tele-phosphohistidine intermediate is the His-82. Glu-166 acts as the Proton donor/acceptor in catalysis.

Belongs to the phosphoglycerate mutase family.

The enzyme catalyses D-mannitol 1-phosphate + H2O = D-mannitol + phosphate. Its activity is regulated as follows. By diethyl pyrocarbonate (DEPC). Its function is as follows. Key enzyme for mannitol biosynthesis. The sequence is that of Mannitol-1-phosphatase from Eimeria tenella (Coccidian parasite).